The chain runs to 362 residues: Uroporphyrinogen decarboxylase (362 aa).

Residues 39–43 (RQAGR), aspartate 88, tyrosine 165, threonine 220, and histidine 334 contribute to the substrate site.

This sequence belongs to the uroporphyrinogen decarboxylase family. In terms of assembly, homodimer.

The protein resides in the cytoplasm. The catalysed reaction is uroporphyrinogen III + 4 H(+) = coproporphyrinogen III + 4 CO2. It participates in porphyrin-containing compound metabolism; protoporphyrin-IX biosynthesis; coproporphyrinogen-III from 5-aminolevulinate: step 4/4. In terms of biological role, catalyzes the decarboxylation of four acetate groups of uroporphyrinogen-III to yield coproporphyrinogen-III. This chain is Uroporphyrinogen decarboxylase, found in Synechococcus sp. (strain JA-3-3Ab) (Cyanobacteria bacterium Yellowstone A-Prime).